Here is a 143-residue protein sequence, read N- to C-terminus: MKTGYFLLEDGNKIEFELYPEAAPGTVANFEKLANEGFYDGLTFHRVIPGFVSQGGCPHGTGTGGPGYTIKCETEGNPHTHEAGALSMAHAGKDTGGSQFFIVHEPQPHLNGVHTVFGKVTSGLEFAKNMSNGDVMKEVRVEG.

The 143-residue stretch at 1-143 (MKTGYFLLED…DVMKEVRVEG (143 aa)) folds into the PPIase cyclophilin-type domain.

Belongs to the cyclophilin-type PPIase family.

It is found in the cytoplasm. It catalyses the reaction [protein]-peptidylproline (omega=180) = [protein]-peptidylproline (omega=0). Its activity is regulated as follows. Inhibited by cyclosporin A (CsA). PPIases accelerate the folding of proteins. It catalyzes the cis-trans isomerization of proline imidic peptide bonds in oligopeptides. The polypeptide is Peptidyl-prolyl cis-trans isomerase B (ppiB) (Bacillus subtilis (strain 168)).